A 182-amino-acid chain; its full sequence is MNRLSTKLVVAIGIGSALYGILGLWGFSIAPNTFIKPALAILTVFGALFGPVAGLLIGLIGHTVTDTIAGWGIWWGWVISSGIIGFTMGFIQKRVGFSVKNGTYNKGDISYLAITGLIGIVIAIIFAGAFDIIVMGEPFDKIVIQVLGATIADVIVFLVLGLPITIGLAKSNKKHTHLKIEK.

5 helical membrane-spanning segments follow: residues 9–29 (VVAI…GFSI), 40–60 (AILT…IGLI), 71–91 (WGIW…MGFI), 114–134 (ITGL…DIIV), and 142–162 (IVIQ…VLGL).

Belongs to the UPF0397 family.

The protein localises to the cell membrane. This is UPF0397 protein BT9727_2423 from Bacillus thuringiensis subsp. konkukian (strain 97-27).